Reading from the N-terminus, the 475-residue chain is Cytosolic non-specific dipeptidase (475 aa).

Ala-2 carries the post-translational modification N-acetylalanine. The residue at position 9 (Lys-9) is an N6-acetyllysine. Ser-58 is subject to Phosphoserine. His-99 is a binding site for Mn(2+). Residue Asp-101 is part of the active site. Asp-132 lines the Mn(2+) pocket. Catalysis depends on Glu-166, which acts as the Proton acceptor. Residues 166 to 167 (EE), Asp-195, and His-228 contribute to the substrate site. The Mn(2+) site is built by Glu-167 and Asp-195. At Ser-299 the chain carries Phosphoserine. Substrate-binding residues include Thr-330, Arg-343, Ser-417, and His-445. Position 445 (His-445) interacts with Mn(2+).

The protein belongs to the peptidase M20A family. Homodimer. It depends on Mn(2+) as a cofactor.

The protein resides in the cytoplasm. The enzyme catalyses Hydrolysis of dipeptides, preferentially hydrophobic dipeptides including prolyl amino acids.. The catalysed reaction is L-threonyl-L-threonine + H2O = 2 L-threonine. It carries out the reaction L-threonyl-L-serine + H2O = L-threonine + L-serine. It catalyses the reaction L-seryl-L-threonine + H2O = L-threonine + L-serine. The enzyme catalyses L-cysteinylglycine + H2O = L-cysteine + glycine. The catalysed reaction is (S)-lactate + L-phenylalanine = N-[(S)-lactoyl]-L-phenylalanine + H2O. Its function is as follows. Catalyzes the peptide bond hydrolysis in dipeptides, displaying a non-redundant activity toward threonyl dipeptides. Mediates threonyl dipeptide catabolism in a tissue-specific way. Has high dipeptidase activity toward cysteinylglycine, an intermediate metabolite in glutathione metabolism. Metabolizes N-lactoyl-amino acids, both through hydrolysis to form lactic acid and amino acids, as well as through their formation by reverse proteolysis. Plays a role in the regulation of cell cycle arrest and apoptosis. This is Cytosolic non-specific dipeptidase (CNDP2) from Pongo abelii (Sumatran orangutan).